The following is a 357-amino-acid chain: Protein FAM118A (357 aa).

Methionine 1 is subject to N-acetylmethionine. Residues 30-50 (LLLVIGTGVSAAVAPGIPALC) traverse the membrane as a helical segment. Serine 311 carries the phosphoserine modification.

Belongs to the FAM118 family.

It is found in the membrane. This Homo sapiens (Human) protein is Protein FAM118A (FAM118A).